The chain runs to 315 residues: tRNA-dihydrouridine(16) synthase (315 aa).

FMN is bound by residues 7 to 9 (PME) and Q68. C98 serves as the catalytic Proton donor. Residues K139, 200 to 202 (NGE), and 224 to 225 (GR) each bind FMN.

The protein belongs to the Dus family. DusC subfamily. FMN is required as a cofactor.

The catalysed reaction is 5,6-dihydrouridine(16) in tRNA + NADP(+) = uridine(16) in tRNA + NADPH + H(+). The enzyme catalyses 5,6-dihydrouridine(16) in tRNA + NAD(+) = uridine(16) in tRNA + NADH + H(+). Its function is as follows. Catalyzes the synthesis of 5,6-dihydrouridine (D), a modified base found in the D-loop of most tRNAs, via the reduction of the C5-C6 double bond in target uridines. Specifically modifies U16 in tRNAs. In Shigella flexneri, this protein is tRNA-dihydrouridine(16) synthase.